The following is a 649-amino-acid chain: MENDPSRRRESISLTPVAKGLENMGADFLESLEEGQLPRSDLSPAEIRSSWSEAAPKPFSRWRNLQPALRARSFCREHMQLFRWIGTGLLCTGLSAFLLVACLLDFQRALALFVLTCVVLTFLGHRLLKRLLGPKLRRFLKPQGHPRLLLWFKRGLALAAFLGLVLWLSLDTSQRPEQLVSFAGICVFVALLFACSKHHCAVSWRAVSWGLGLQFVLGLLVIRTEPGFIAFEWLGEQIRIFLSYTKAGSSFVFGEALVKDVFAFQVLPIIVFFSCVISVLYHVGLMQWVILKIAWLMQVTMGTTATETLSVAGNIFVSQTEAPLLIRPYLADMTLSEVHVVMTGGYATIAGSLLGAYISFGIDATSLIAASVMAAPCALALSKLVYPEVEESKFRREEGVKLTYGDAQNLIEAASTGAAISVKVVANIAANLIAFLAVLDFINAALSWLGDMVDIQGLSFQLICSYILRPVAFLMGVAWEDCPVVAELLGIKLFLNEFVAYQDLSKYKQRRLAGAEEWVGDRKQWISVRAEVLTTFALCGFANFSSIGIMLGGLTSMVPQRKSDFSQIVLRALFTGACVSLVNACMAGILYMPRGAEVDCMSLLNTTLSSSSFEIYQCCREAFQSVNPEFSPEALDNCCRFYNHTICAQ.

The Cytoplasmic portion of the chain corresponds to 1–80 (MENDPSRRRE…ARSFCREHMQ (80 aa)). Residues 81–104 (LFRWIGTGLLCTGLSAFLLVACLL) form a helical membrane-spanning segment. The Extracellular segment spans residues 105–109 (DFQRA). A helical membrane pass occupies residues 110–128 (LALFVLTCVVLTFLGHRLL). Residues 129-147 (KRLLGPKLRRFLKPQGHPR) are Cytoplasmic-facing. The helical transmembrane segment at 148 to 167 (LLLWFKRGLALAAFLGLVLW) threads the bilayer. Residues 168-178 (LSLDTSQRPEQ) are Extracellular-facing. A helical transmembrane segment spans residues 179-195 (LVSFAGICVFVALLFAC). Residues 196–201 (SKHHCA) are Cytoplasmic-facing. The chain crosses the membrane as a helical span at residues 202 to 222 (VSWRAVSWGLGLQFVLGLLVI). Topologically, residues 223–261 (RTEPGFIAFEWLGEQIRIFLSYTKAGSSFVFGEALVKDV) are extracellular. The chain crosses the membrane as a helical span at residues 262–283 (FAFQVLPIIVFFSCVISVLYHV). The Cytoplasmic portion of the chain corresponds to 284 to 294 (GLMQWVILKIA). Residues 295-318 (WLMQVTMGTTATETLSVAGNIFVS) form a helical membrane-spanning segment. Residues 319 to 337 (QTEAPLLIRPYLADMTLSE) lie on the Extracellular side of the membrane. The chain crosses the membrane as a helical span at residues 338-360 (VHVVMTGGYATIAGSLLGAYISF). At 361 to 366 (GIDATS) the chain is on the cytoplasmic side. A helical transmembrane segment spans residues 367–386 (LIAASVMAAPCALALSKLVY). Over 387-423 (PEVEESKFRREEGVKLTYGDAQNLIEAASTGAAISVK) the chain is Extracellular. Residues 424–446 (VVANIAANLIAFLAVLDFINAAL) traverse the membrane as a helical segment. The Cytoplasmic portion of the chain corresponds to 447 to 457 (SWLGDMVDIQG). The helical transmembrane segment at 458-479 (LSFQLICSYILRPVAFLMGVAW) threads the bilayer. Topologically, residues 480–534 (EDCPVVAELLGIKLFLNEFVAYQDLSKYKQRRLAGAEEWVGDRKQWISVRAEVLT) are extracellular. A helical transmembrane segment spans residues 535–558 (TFALCGFANFSSIGIMLGGLTSMV). Residues 559-569 (PQRKSDFSQIV) lie on the Cytoplasmic side of the membrane. A helical transmembrane segment spans residues 570-592 (LRALFTGACVSLVNACMAGILYM). Over 593-649 (PRGAEVDCMSLLNTTLSSSSFEIYQCCREAFQSVNPEFSPEALDNCCRFYNHTICAQ) the chain is Extracellular. Residues Asn605 and Asn643 are each glycosylated (N-linked (GlcNAc...) asparagine).

This sequence belongs to the concentrative nucleoside transporter (CNT) (TC 2.A.41) family. In terms of processing, N-glycosylated. N-glycosylation is required for localization to the plasma membrane and the transporter activity. In terms of tissue distribution, expressed in kidney.

It localises to the cell membrane. Its subcellular location is the apical cell membrane. The catalysed reaction is uridine(out) + Na(+)(out) = uridine(in) + Na(+)(in). It carries out the reaction thymidine(out) + Na(+)(out) = thymidine(in) + Na(+)(in). It catalyses the reaction cytidine(out) + Na(+)(out) = cytidine(in) + Na(+)(in). The enzyme catalyses adenosine(out) + Na(+)(out) = adenosine(in) + Na(+)(in). With respect to regulation, due to its high apparent affinity but slow transport, adenosine could act as a negative regulator of pyrimidine transport under some conditions. In terms of biological role, sodium and pyrimidine nucleoside symporter of the plasma membrane that imports uridine, thymidine and cytidine into cells by coupling their transport to the transmembrane sodium electrochemical gradient. Also transports adenosine, an atypical substrate transported with high apparent affinity, but low maximum velocity. Therefore, exhibits the transport characteristics of the nucleoside transport system cit or N2 subtype (N2/cit). Involved in renal nucleoside (re)absorption. The protein is Sodium/nucleoside cotransporter 1 of Homo sapiens (Human).